The chain runs to 529 residues: PTS system alpha-glucoside-specific EIICB component (529 aa).

The region spanning 1 to 416 (MMKKVQRFGG…MDLKTPGRED (416 aa)) is the PTS EIIC type-1 domain. 12 consecutive transmembrane segments (helical) span residues 8 to 28 (FGGAMMAPVLLFAFTGIVVGL), 59 to 79 (GWTVFRQMPILFAIGLPISLA), 91 to 111 (FALYTTFNYFVAAILKVFYGI), 130 to 150 (VPTLDTNLFGGILIAALVVYL), 170 to 190 (VFVYIVGFVVMIPCAFLTVLI), 198 to 218 (ISALQGFMKASGIFGVWIYTF), 222 to 242 (ILIPTGLHHFVYTPFVFGPAA), 272 to 292 (GGFALHGNSKIFGAPGIALAM), 304 to 324 (VAALLIPIIFTAVISGITEPL), 328 to 348 (FLFIAPVLFAVHACLAATMAA), 352 to 372 (AFGVVGNMGGGLLDFFFLNWI), and 380 to 400 (GTVIAQIVIGLIFTAIYFVVF). The region spanning 450–529 (AQKGAIILEA…ERIEEMMKKG (80 aa)) is the PTS EIIB type-1 domain. Catalysis depends on cysteine 472, which acts as the Phosphocysteine intermediate; for EIIB activity.

It is found in the cell membrane. Its function is as follows. The phosphoenolpyruvate-dependent sugar phosphotransferase system (sugar PTS), a major carbohydrate active -transport system, catalyzes the phosphorylation of incoming sugar substrates concomitantly with their translocation across the cell membrane. This system is probably involved in transport of the alpha-glucosides trehalulose, turanose, maltulose and palatinose. The sequence is that of PTS system alpha-glucoside-specific EIICB component from Leptotrichia buccalis (strain ATCC 14201 / DSM 1135 / JCM 12969 / NCTC 10249 / C-1013-b).